The chain runs to 495 residues: MTAITDLGLAGLRDGFRAGDFSAREIADAFNGAVAGAKALNAFIIETPDHATAAAEAADRARAAGELLPLSGVPLGIKDLFCTAGHQTTAASHMLGGFTPTYESTVTGKLFAAGAGMLGKLNLDQFAMGSSNETSAYGNVVSPWRRNDGGNAPLAPGGSSGGSSSAIAARIVPAATGTDTGGSIRQPAAFTGIAGIKPTYGRCSRFGIVAFASSLDQAGAMAQDVRDSAILLEAMSGFDPKDSTSLDVAVPKWEANLSSDLKGKKVGIPKEYRVDNMPAEIDALWRQGIEWLRDAGAEIVDVSLPHTRYALPTYYIIAPAEASSNLARYDGVRYGLRDLPEGANLQEMYAATRAAGFGPEVKRRILIGTYVLSAGYYDAYYTKAQKVRALIARDFEEAFRQVDVLLTPTAPSAAFALGEKSADPLEMYLNDVFTVPASLAGVPAMSVPAGLDGQGLPLGLQIIGRPLDEQGVLNAGLAIEQRAGFTAKPQNWWAK.

Catalysis depends on charge relay system residues K78 and S159. The active-site Acyl-ester intermediate is the S183.

This sequence belongs to the amidase family. GatA subfamily. In terms of assembly, heterotrimer of A, B and C subunits.

The enzyme catalyses L-glutamyl-tRNA(Gln) + L-glutamine + ATP + H2O = L-glutaminyl-tRNA(Gln) + L-glutamate + ADP + phosphate + H(+). Allows the formation of correctly charged Gln-tRNA(Gln) through the transamidation of misacylated Glu-tRNA(Gln) in organisms which lack glutaminyl-tRNA synthetase. The reaction takes place in the presence of glutamine and ATP through an activated gamma-phospho-Glu-tRNA(Gln). The polypeptide is Glutamyl-tRNA(Gln) amidotransferase subunit A (Rhizorhabdus wittichii (strain DSM 6014 / CCUG 31198 / JCM 15750 / NBRC 105917 / EY 4224 / RW1) (Sphingomonas wittichii)).